A 144-amino-acid polypeptide reads, in one-letter code: Transcriptional regulator MraZ (144 aa).

SpoVT-AbrB domains are found at residues 5-47 (TYTP…PRAE) and 77-120 (TDEQ…DAQA).

This sequence belongs to the MraZ family. In terms of assembly, forms oligomers.

Its subcellular location is the cytoplasm. The protein localises to the nucleoid. The sequence is that of Transcriptional regulator MraZ from Mycolicibacterium vanbaalenii (strain DSM 7251 / JCM 13017 / BCRC 16820 / KCTC 9966 / NRRL B-24157 / PYR-1) (Mycobacterium vanbaalenii).